Reading from the N-terminus, the 136-residue chain is Small ribosomal subunit protein bS16 (136 aa).

It belongs to the bacterial ribosomal protein bS16 family.

In Pseudarthrobacter chlorophenolicus (strain ATCC 700700 / DSM 12829 / CIP 107037 / JCM 12360 / KCTC 9906 / NCIMB 13794 / A6) (Arthrobacter chlorophenolicus), this protein is Small ribosomal subunit protein bS16.